A 371-amino-acid polypeptide reads, in one-letter code: Otolith matrix protein 1 (371 aa).

The signal sequence occupies residues M1–S21. One can recognise a Transferrin-like domain in the interval I27 to C367.

Interacts with OTOL1.

It is found in the secreted. Required for normal otolith growth and deposition of otolin-1 in the otolith. The chain is Otolith matrix protein 1 (otomp) from Danio rerio (Zebrafish).